Consider the following 860-residue polypeptide: Alanine--tRNA ligase (860 aa).

Zn(2+) contacts are provided by histidine 563, histidine 567, cysteine 665, and histidine 669.

Belongs to the class-II aminoacyl-tRNA synthetase family. It depends on Zn(2+) as a cofactor.

It is found in the cytoplasm. It catalyses the reaction tRNA(Ala) + L-alanine + ATP = L-alanyl-tRNA(Ala) + AMP + diphosphate. Functionally, catalyzes the attachment of alanine to tRNA(Ala) in a two-step reaction: alanine is first activated by ATP to form Ala-AMP and then transferred to the acceptor end of tRNA(Ala). Also edits incorrectly charged Ser-tRNA(Ala) and Gly-tRNA(Ala) via its editing domain. In Vibrio cholerae serotype O1 (strain ATCC 39315 / El Tor Inaba N16961), this protein is Alanine--tRNA ligase.